The primary structure comprises 126 residues: Glycine cleavage system H protein (126 aa).

The 83-residue stretch at 22-104 folds into the Lipoyl-binding domain; it reads VATIGITEYA…YEKAWMVKIE (83 aa). N6-lipoyllysine is present on K63.

Belongs to the GcvH family. As to quaternary structure, the glycine cleavage system is composed of four proteins: P, T, L and H. (R)-lipoate serves as cofactor.

In terms of biological role, the glycine cleavage system catalyzes the degradation of glycine. The H protein shuttles the methylamine group of glycine from the P protein to the T protein. Its function is as follows. Is also involved in protein lipoylation via its role as an octanoyl/lipoyl carrier protein intermediate. This Staphylococcus epidermidis (strain ATCC 35984 / DSM 28319 / BCRC 17069 / CCUG 31568 / BM 3577 / RP62A) protein is Glycine cleavage system H protein.